A 105-amino-acid polypeptide reads, in one-letter code: uncharacterized protein (105 aa).

This is an uncharacterized protein from Bacillus phage SPbeta (Bacillus phage SPBc2).